The chain runs to 223 residues: DNA mismatch repair protein MutH (223 aa).

This sequence belongs to the MutH family.

The protein resides in the cytoplasm. Sequence-specific endonuclease that cleaves unmethylated GATC sequences. It is involved in DNA mismatch repair. This is DNA mismatch repair protein MutH from Haemophilus influenzae (strain 86-028NP).